A 247-amino-acid polypeptide reads, in one-letter code: Aliphatic sulfonates import ATP-binding protein SsuB 2 (247 aa).

One can recognise an ABC transporter domain in the interval 28–242 (VSVRGLQRRY…ALRPILLEEL (215 aa)). Position 60-67 (60-67 (GESGCGKT)) interacts with ATP.

Belongs to the ABC transporter superfamily. Aliphatic sulfonates importer (TC 3.A.1.17.2) family. As to quaternary structure, the complex is composed of two ATP-binding proteins (SsuB), two transmembrane proteins (SsuC) and a solute-binding protein (SsuA).

It is found in the cell inner membrane. It catalyses the reaction ATP + H2O + aliphatic sulfonate-[sulfonate-binding protein]Side 1 = ADP + phosphate + aliphatic sulfonateSide 2 + [sulfonate-binding protein]Side 1.. Its function is as follows. Part of the ABC transporter complex SsuABC involved in aliphatic sulfonates import. Responsible for energy coupling to the transport system. In Paraburkholderia xenovorans (strain LB400), this protein is Aliphatic sulfonates import ATP-binding protein SsuB 2.